The chain runs to 150 residues: UPF0260 protein PP_4587 (150 aa).

This sequence belongs to the UPF0260 family.

The chain is UPF0260 protein PP_4587 from Pseudomonas putida (strain ATCC 47054 / DSM 6125 / CFBP 8728 / NCIMB 11950 / KT2440).